The chain runs to 105 residues: Large ribosomal subunit protein eL33 (105 aa).

The protein belongs to the eukaryotic ribosomal protein eL33 family.

Functionally, the protein was found to bind to both initiator and elongator tRNAs and consequently was assigned to the P site or P and A site. This Dictyostelium discoideum (Social amoeba) protein is Large ribosomal subunit protein eL33 (rpl35a).